Reading from the N-terminus, the 464-residue chain is Glycine receptor subunit alpha-3 (464 aa).

Residues 1–33 (MAHVRHFRTLVSGFYFWEAALLLSLVATKETNS) form the signal peptide. The Extracellular portion of the chain corresponds to 34-255 (ARSRSAPMSP…RFHLERQMGY (222 aa)). N71 carries an N-linked (GlcNAc...) asparagine glycan. C171 and C185 are oxidised to a cystine. E225 and D227 together coordinate Zn(2+). A disulfide bridge connects residues C231 and C242. 235–240 (YNTGKF) is a binding site for strychnine. Position 248 (H248) interacts with Zn(2+). The chain crosses the membrane as a helical span at residues 256–277 (YLIQMYIPSLLIVILSWVSFWI). At 278 to 282 (NMDAA) the chain is on the cytoplasmic side. Residues 283–303 (PARVALGITTVLTMTTQSSGS) traverse the membrane as a helical segment. The Extracellular portion of the chain corresponds to 304-314 (RASLPKVSYVK). The helical transmembrane segment at 315–335 (AIDIWMAVCLLFVFSALLEYA) threads the bilayer. The Cytoplasmic portion of the chain corresponds to 336-430 (AVNFVSRQHK…FIDRAKKIDT (95 aa)). S370 is subject to Phosphoserine. The residue at position 379 (S379) is a Phosphoserine; by PKA. A helical transmembrane segment spans residues 431–451 (ISRACFPLAFLIFNIFYWVIY). The Extracellular segment spans residues 452-464 (KILRHEDIHQQQD).

Belongs to the ligand-gated ion channel (TC 1.A.9) family. Glycine receptor (TC 1.A.9.3) subfamily. GLRA3 sub-subfamily. In terms of assembly, homopentamer (in vitro). Heteropentamer composed of GLRA3 and GLRB. Both homopentamers and heteropentamers form functional ion channels, but their characteristics are subtly different. In terms of processing, phosphorylated by PKA; this causes down-regulation of channel activity. Dephosphorylated in response to activation of HTR1A signaling; this increases channel activity. In terms of tissue distribution, detected in brainstem, also in neurons that control rhythmic breathing. Detected in superficial laminae of the dorsal horn of the thoracic spinal cord. Detected in dentate gyrus in hippocampus, especially in stratum granulare. Detected in the inner plexiform layer in the retina (at protein level). Detected in midbrain, thalamus, brain cortex, hippocampus, and at lower levels in cerebellum.

Its subcellular location is the postsynaptic cell membrane. The protein localises to the synapse. It is found in the perikaryon. It localises to the cell projection. The protein resides in the dendrite. Its subcellular location is the cell membrane. It catalyses the reaction chloride(in) = chloride(out). Inhibited by prostaglandin E2, probably via PKA-mediated phosphorylation at Ser-379. Functionally, glycine receptors are ligand-gated chloride channels. Channel opening is triggered by extracellular glycine. Channel characteristics depend on the subunit composition; heteropentameric channels display faster channel closure. Plays an important role in the down-regulation of neuronal excitability. Contributes to the generation of inhibitory postsynaptic currents. Contributes to increased pain perception in response to increased prostaglandin E2 levels. Plays a role in the regulation of breathing rhythm, especially of the duration of the postinspiratory phase. Plays a role in cellular responses to ethanol. In Mus musculus (Mouse), this protein is Glycine receptor subunit alpha-3 (Glra3).